We begin with the raw amino-acid sequence, 211 residues long: Uridine kinase (211 aa).

12-19 (GGSGSGKT) contributes to the ATP binding site.

It belongs to the uridine kinase family.

It is found in the cytoplasm. The catalysed reaction is uridine + ATP = UMP + ADP + H(+). It carries out the reaction cytidine + ATP = CMP + ADP + H(+). The protein operates within pyrimidine metabolism; CTP biosynthesis via salvage pathway; CTP from cytidine: step 1/3. Its pathway is pyrimidine metabolism; UMP biosynthesis via salvage pathway; UMP from uridine: step 1/1. The polypeptide is Uridine kinase (Bacillus licheniformis (strain ATCC 14580 / DSM 13 / JCM 2505 / CCUG 7422 / NBRC 12200 / NCIMB 9375 / NCTC 10341 / NRRL NRS-1264 / Gibson 46)).